Consider the following 130-residue polypeptide: Protein YoeA (130 aa).

The N-terminal stretch at 1–28 (MLYNIPCRIYILSTLSLCISGIVSTATA) is a signal peptide. Residues 51–130 (NLWESPATIQ…RCRRYSRGER (80 aa)) form the TBDR plug domain.

Belongs to the TonB-dependent receptor family.

The chain is Protein YoeA (yoeA) from Escherichia coli (strain K12).